The sequence spans 592 residues: Arginine--tRNA ligase (592 aa).

The short motif at Ala-131 to His-141 is the 'HIGH' region element.

It belongs to the class-I aminoacyl-tRNA synthetase family. Monomer.

It is found in the cytoplasm. The catalysed reaction is tRNA(Arg) + L-arginine + ATP = L-arginyl-tRNA(Arg) + AMP + diphosphate. The polypeptide is Arginine--tRNA ligase (Rhodospirillum rubrum (strain ATCC 11170 / ATH 1.1.1 / DSM 467 / LMG 4362 / NCIMB 8255 / S1)).